The sequence spans 54 residues: Large ribosomal subunit protein bL32c (54 aa).

The disordered stretch occupies residues 1–20; that stretch reads MAVPKKKMSKSRRNSRKSNW.

The protein belongs to the bacterial ribosomal protein bL32 family.

The protein resides in the plastid. It localises to the chloroplast. This chain is Large ribosomal subunit protein bL32c (rpl32), found in Euglena gracilis.